A 293-amino-acid polypeptide reads, in one-letter code: Large ribosomal subunit protein uL18 (293 aa).

The disordered stretch occupies residues 249 to 273 (DASPAAKKAAKPSKRHTAKRLTYDE). The segment covering 256 to 267 (KAAKPSKRHTAK) has biased composition (basic residues).

The protein belongs to the universal ribosomal protein uL18 family. Component of the large ribosomal subunit (LSU).

Its subcellular location is the cytoplasm. The protein localises to the nucleus. Component of the ribosome, a large ribonucleoprotein complex responsible for the synthesis of proteins in the cell. The small ribosomal subunit (SSU) binds messenger RNAs (mRNAs) and translates the encoded message by selecting cognate aminoacyl-transfer RNA (tRNA) molecules. The large subunit (LSU) contains the ribosomal catalytic site termed the peptidyl transferase center (PTC), which catalyzes the formation of peptide bonds, thereby polymerizing the amino acids delivered by tRNAs into a polypeptide chain. The nascent polypeptides leave the ribosome through a tunnel in the LSU and interact with protein factors that function in enzymatic processing, targeting, and the membrane insertion of nascent chains at the exit of the ribosomal tunnel. The polypeptide is Large ribosomal subunit protein uL18 (rpl-5) (Caenorhabditis elegans).